Consider the following 414-residue polypeptide: Putative L-lactate dehydrogenase (414 aa).

An FMN hydroxy acid dehydrogenase domain is found at 29-406; sequence RRLGAALTIQ…SPRHVTQLRR (378 aa). A 2-oxocarboxylate is bound at residue Y55. Residues S137 and Q159 each coordinate FMN. Residue Y161 coordinates a 2-oxocarboxylate. T187 contacts FMN. R196 contacts a 2-oxocarboxylate. An FMN-binding site is contributed by K277. H301 (proton acceptor) is an active-site residue. R304 is an a 2-oxocarboxylate binding site. FMN contacts are provided by residues 332–336 and 355–356; these read DTGIM and GR.

Belongs to the FMN-dependent alpha-hydroxy acid dehydrogenase family. It depends on FMN as a cofactor.

It catalyses the reaction (S)-lactate + A = pyruvate + AH2. The chain is Putative L-lactate dehydrogenase (lldD) from Mycobacterium tuberculosis (strain ATCC 25618 / H37Rv).